The following is a 138-amino-acid chain: Chorion protein S16 (138 aa).

The first 20 residues, 1-20 (MSATLRLLCLMACCVALAVA), serve as a signal peptide directing secretion.

It belongs to the chorion protein S16 family.

The protein localises to the secreted. Functionally, chorion membrane (egg shell) protein; plays a role in protecting the egg from the environment. The protein is Chorion protein S16 (Cp16) of Drosophila melanogaster (Fruit fly).